Consider the following 313-residue polypeptide: Homoserine O-succinyltransferase (313 aa).

C142 functions as the Acyl-thioester intermediate in the catalytic mechanism. K163 and S192 together coordinate substrate. H235 acts as the Proton acceptor in catalysis. E237 is an active-site residue. R249 contributes to the substrate binding site.

This sequence belongs to the MetA family.

The protein localises to the cytoplasm. It carries out the reaction L-homoserine + succinyl-CoA = O-succinyl-L-homoserine + CoA. The protein operates within amino-acid biosynthesis; L-methionine biosynthesis via de novo pathway; O-succinyl-L-homoserine from L-homoserine: step 1/1. Transfers a succinyl group from succinyl-CoA to L-homoserine, forming succinyl-L-homoserine. This is Homoserine O-succinyltransferase from Aliivibrio fischeri (strain MJ11) (Vibrio fischeri).